A 65-amino-acid chain; its full sequence is Large ribosomal subunit protein uL29 (65 aa).

The protein belongs to the universal ribosomal protein uL29 family.

The protein is Large ribosomal subunit protein uL29 of Coxiella burnetii (strain CbuK_Q154) (Coxiella burnetii (strain Q154)).